The chain runs to 331 residues: Tryptophan--tRNA ligase (331 aa).

ATP contacts are provided by residues 10-12 and 18-19; these read QPS and GN. Residues 11-19 carry the 'HIGH' region motif; sequence PSGQLTLGN. D133 is a binding site for L-tryptophan. ATP is bound by residues 145–147, V184, and 193–197; these read GED and KMSKS. A 'KMSKS' region motif is present at residues 193 to 197; that stretch reads KMSKS.

This sequence belongs to the class-I aminoacyl-tRNA synthetase family. In terms of assembly, homodimer.

Its subcellular location is the cytoplasm. It catalyses the reaction tRNA(Trp) + L-tryptophan + ATP = L-tryptophyl-tRNA(Trp) + AMP + diphosphate + H(+). Catalyzes the attachment of tryptophan to tRNA(Trp). The polypeptide is Tryptophan--tRNA ligase (Listeria innocua serovar 6a (strain ATCC BAA-680 / CLIP 11262)).